Reading from the N-terminus, the 593-residue chain is Tyrosine-protein phosphatase non-receptor type 11 (593 aa).

2 SH2 domains span residues 6–102 (WFHP…KYPL) and 112–216 (WFHG…KQPL). The 275-residue stretch at 247–521 (FWEEFETLQQ…RFIYMAVQHY (275 aa)) folds into the Tyrosine-protein phosphatase domain. Residues Asp425, 459-465 (CSAGIGR), and Gln506 each bind substrate. The active-site Phosphocysteine intermediate is the Cys459. Polar residues predominate over residues 548 to 557 (SLSDQTSGDQ). Positions 548–575 (SLSDQTSGDQSPLPPCTPTPTCPEMRED) are disordered. The segment covering 559-568 (PLPPCTPTPT) has biased composition (pro residues).

Belongs to the protein-tyrosine phosphatase family. Non-receptor class 2 subfamily. In terms of processing, phosphorylated by tyrosine-protein kinases. Expressed in embryonic fibroblast, hematopoietic, erythroid, myeloid and lymphoid cells.

The protein localises to the cytoplasm. The catalysed reaction is O-phospho-L-tyrosyl-[protein] + H2O = L-tyrosyl-[protein] + phosphate. Functionally, this PTPase activity may directly link growth factor receptors and other signaling proteins through protein-tyrosine phosphorylation. The SH2 regions may interact with other cellular components to modulate its own phosphatase activity against interacting substrates. May play a positive role during the stages of erythroid cell proliferation. The chain is Tyrosine-protein phosphatase non-receptor type 11 (PTPN11) from Gallus gallus (Chicken).